Here is a 117-residue protein sequence, read N- to C-terminus: Ribosome-binding factor A (117 aa).

Belongs to the RbfA family. As to quaternary structure, monomer. Binds 30S ribosomal subunits, but not 50S ribosomal subunits or 70S ribosomes.

It is found in the cytoplasm. Its function is as follows. One of several proteins that assist in the late maturation steps of the functional core of the 30S ribosomal subunit. Associates with free 30S ribosomal subunits (but not with 30S subunits that are part of 70S ribosomes or polysomes). Required for efficient processing of 16S rRNA. May interact with the 5'-terminal helix region of 16S rRNA. The protein is Ribosome-binding factor A of Petrotoga mobilis (strain DSM 10674 / SJ95).